The following is a 506-amino-acid chain: Probable cytochrome P450 519E1 (506 aa).

The chain crosses the membrane as a helical span at residues Met1–Lys21. A heme-binding site is contributed by Cys453.

It belongs to the cytochrome P450 family. The cofactor is heme.

It is found in the membrane. This is Probable cytochrome P450 519E1 (cyp519E1) from Dictyostelium discoideum (Social amoeba).